Consider the following 462-residue polypeptide: Tubulin gamma-1 chain (462 aa).

Position 142 to 148 (142 to 148 (AGGTGSG)) interacts with GTP.

This sequence belongs to the tubulin family.

The protein resides in the cytoplasm. It localises to the cytoskeleton. Its subcellular location is the microtubule organizing center. The protein localises to the centrosome. In terms of biological role, tubulin is the major constituent of microtubules. The gamma chain is found at microtubule organizing centers (MTOC) such as the spindle poles or the centrosome, suggesting that it is involved in the minus-end nucleation of microtubule assembly. This is Tubulin gamma-1 chain from Euplotes crassus.